Here is a 399-residue protein sequence, read N- to C-terminus: Tryptophan synthase beta chain (399 aa).

Lys90 carries the post-translational modification N6-(pyridoxal phosphate)lysine.

Belongs to the TrpB family. As to quaternary structure, tetramer of two alpha and two beta chains. It depends on pyridoxal 5'-phosphate as a cofactor.

The catalysed reaction is (1S,2R)-1-C-(indol-3-yl)glycerol 3-phosphate + L-serine = D-glyceraldehyde 3-phosphate + L-tryptophan + H2O. Its pathway is amino-acid biosynthesis; L-tryptophan biosynthesis; L-tryptophan from chorismate: step 5/5. Functionally, the beta subunit is responsible for the synthesis of L-tryptophan from indole and L-serine. In Bacillus pumilus (strain SAFR-032), this protein is Tryptophan synthase beta chain.